Reading from the N-terminus, the 397-residue chain is Staphylopine export protein (397 aa).

12 helical membrane passes run 12–32 (LYIL…FIPL), 38–58 (GATN…AMVF), 77–97 (IILI…LEGY), 102–122 (VMQG…IIDA), 134–154 (LYSL…VGIW), 158–178 (NISL…FFGY), 217–237 (GIIM…VPLY), 239–259 (VSLG…AVVA), 285–305 (LLVI…IIFY), 309–329 (ILIG…LSFV), 337–357 (MLLG…GALM), and 363–383 (LVGF…IMIM).

It belongs to the major facilitator superfamily.

The protein resides in the cell membrane. Functionally, involved in the export of the metallophore staphylopine. This chain is Staphylopine export protein, found in Staphylococcus aureus (strain Mu50 / ATCC 700699).